Reading from the N-terminus, the 466-residue chain is Soluble pyridine nucleotide transhydrogenase (466 aa).

36–45 (ERYQNVGGGC) contributes to the FAD binding site.

It belongs to the class-I pyridine nucleotide-disulfide oxidoreductase family. FAD is required as a cofactor.

It is found in the cytoplasm. It carries out the reaction NAD(+) + NADPH = NADH + NADP(+). Functionally, conversion of NADPH, generated by peripheral catabolic pathways, to NADH, which can enter the respiratory chain for energy generation. This chain is Soluble pyridine nucleotide transhydrogenase, found in Escherichia fergusonii (strain ATCC 35469 / DSM 13698 / CCUG 18766 / IAM 14443 / JCM 21226 / LMG 7866 / NBRC 102419 / NCTC 12128 / CDC 0568-73).